A 252-amino-acid polypeptide reads, in one-letter code: 5-oxoprolinase subunit A (252 aa).

It belongs to the LamB/PxpA family. In terms of assembly, forms a complex composed of PxpA, PxpB and PxpC.

It catalyses the reaction 5-oxo-L-proline + ATP + 2 H2O = L-glutamate + ADP + phosphate + H(+). Its function is as follows. Catalyzes the cleavage of 5-oxoproline to form L-glutamate coupled to the hydrolysis of ATP to ADP and inorganic phosphate. This is 5-oxoprolinase subunit A from Chloroflexus aggregans (strain MD-66 / DSM 9485).